We begin with the raw amino-acid sequence, 516 residues long: Acyl-lipid (7-3)-desaturase, chloroplastic (516 aa).

The segment at 1–25 is disordered; that stretch reads MNATMQRSAVAGRTSGKVATTARAS. A chloroplast-targeting transit peptide spans 1–47; it reads MNATMQRSAVAGRTSGKVATTARASSMARPRLPIAGRVARRSAVTVR. A Cytochrome b5 heme-binding domain is found at 83–148; sequence WTVYRGVAYD…LADFPVDAVP (66 aa). The heme site is built by His100 and His123. The next 2 helical transmembrane spans lie at 186–206 and 209–229; these read GAAF…TYDA and LTGA…QHCG. The short motif at 227–231 is the Histidine box-1 element; that stretch reads HCGNH. Positions 262-267 match the Histidine box-2 motif; sequence HQVSHH. The next 4 membrane-spanning stretches (helical) occupy residues 305 to 325, 354 to 374, 375 to 395, and 423 to 443; these read MWAL…QALL, FLLY…GGAA, GYLF…HNVP, and VLTS…GLNL. The Histidine box-3 motif lies at 444 to 448; the sequence is QIEHH.

The protein belongs to the fatty acid desaturase type 1 family. Fe(2+) serves as cofactor.

The protein resides in the plastid. It is found in the chloroplast membrane. The enzyme catalyses a (7Z,10Z,13Z,16Z,19Z)-docosapentaenoyl-containing glycerolipid + 2 Fe(II)-[cytochrome b5] + O2 + 2 H(+) = a (4Z,7Z,10Z,13Z,16Z,19Z)-docosahexaenoyl-containing glycerolipid + 2 Fe(III)-[cytochrome b5] + 2 H2O. It carries out the reaction a (7Z,10Z,13Z,16Z)-docosatetraenoyl-containing glycerolipid + 2 Fe(II)-[cytochrome b5] + O2 + 2 H(+) = a (4Z,7Z,10Z,13Z,16Z)-docosapentaenoyl-containing glycerolipid + 2 Fe(III)-[cytochrome b5] + 2 H2O. Its function is as follows. Fatty acid desaturase that introduces a cis double bond at the 4-position in 16-carbon polyunsaturated fatty acids that contain a Delta(7) double bond, resulting in the production of 16 carbon fatty acid (7Z,10Z,13Z)-hexadeca-7,10,13-trienoate. The protein is Acyl-lipid (7-3)-desaturase, chloroplastic of Chlamydomonas reinhardtii (Chlamydomonas smithii).